The chain runs to 210 residues: 3-hexulose-6-phosphate synthase (210 aa).

It belongs to the HPS/KGPDC family. HPS subfamily.

It carries out the reaction D-ribulose 5-phosphate + formaldehyde = D-arabino-hex-3-ulose 6-phosphate. The protein operates within one-carbon metabolism; formaldehyde assimilation via RuMP pathway; D-fructose 6-phosphate from D-ribulose 5-phosphate and formaldehyde: step 1/2. In terms of biological role, catalyzes the condensation of ribulose 5-phosphate with formaldehyde to form 3-hexulose 6-phosphate. This Staphylococcus aureus (strain MRSA252) protein is 3-hexulose-6-phosphate synthase.